Reading from the N-terminus, the 312-residue chain is Acetyl-coenzyme A carboxylase carboxyl transferase subunit alpha (312 aa).

The region spanning 36–286 is the CoA carboxyltransferase C-terminal domain; it reads NLEKEISKTY…ADYVKKSLNE (251 aa).

It belongs to the AccA family. In terms of assembly, acetyl-CoA carboxylase is a heterohexamer composed of biotin carboxyl carrier protein (AccB), biotin carboxylase (AccC) and two subunits each of ACCase subunit alpha (AccA) and ACCase subunit beta (AccD).

Its subcellular location is the cytoplasm. It carries out the reaction N(6)-carboxybiotinyl-L-lysyl-[protein] + acetyl-CoA = N(6)-biotinyl-L-lysyl-[protein] + malonyl-CoA. It functions in the pathway lipid metabolism; malonyl-CoA biosynthesis; malonyl-CoA from acetyl-CoA: step 1/1. Functionally, component of the acetyl coenzyme A carboxylase (ACC) complex. First, biotin carboxylase catalyzes the carboxylation of biotin on its carrier protein (BCCP) and then the CO(2) group is transferred by the carboxyltransferase to acetyl-CoA to form malonyl-CoA. The chain is Acetyl-coenzyme A carboxylase carboxyl transferase subunit alpha from Campylobacter jejuni (strain RM1221).